The sequence spans 249 residues: MSGHSKWNNIQHRKGAQDKKRAKLFTKFGRELTIAAKEGGGDPNFNPRLRLAIEKAKAGNMPKDILERAIKKGSGELEGVDFTEMRYEGYGPAGTAFIVEAVTDNKNRTASEMRMTFTRKDGNLGADGAVSWMFKKKGVITVKAEGIDADEFMMAALEAGAEDVTEDDGYFEVTTEYTEFQTVLENLKNAGYQYEEAEISMIPENTVEITDLETAKKVMALYDALEDLDDSQNVYSNFDIPDEILEQLD.

Polar residues predominate over residues 1–10 (MSGHSKWNNI). The interval 1–20 (MSGHSKWNNIQHRKGAQDKK) is disordered.

Belongs to the TACO1 family.

Its subcellular location is the cytoplasm. This chain is Probable transcriptional regulatory protein FN1661, found in Fusobacterium nucleatum subsp. nucleatum (strain ATCC 25586 / DSM 15643 / BCRC 10681 / CIP 101130 / JCM 8532 / KCTC 2640 / LMG 13131 / VPI 4355).